Consider the following 97-residue polypeptide: uncharacterized protein (97 aa).

Positions 27–50 (IGESEDKTNSRGQPATMKEDEVED) are disordered.

This is an uncharacterized protein from Caldicellulosiruptor saccharolyticus (Caldocellum saccharolyticum).